The following is a 269-amino-acid chain: Surfeit locus protein 4 (269 aa).

Transmembrane regions (helical) follow at residues L64–V84, Y92–W112, F179–F199, L203–W223, and F239–G259. The Di-lysine motif motif lies at K266–W269.

Belongs to the SURF4 family. As to quaternary structure, found in a complex composed at least of SURF4, TMED2 and TMED10. May interact with LMAN1. Interacts with ZFYVE27 and with KIF5A in a ZFYVE27-dependent manner. Interacts with STING1. Interacts with SAR1B. Interacts with TMEM41B.

The protein resides in the endoplasmic reticulum membrane. Its subcellular location is the endoplasmic reticulum-Golgi intermediate compartment membrane. The protein localises to the golgi apparatus membrane. Its function is as follows. Endoplasmic reticulum cargo receptor that mediates the export of lipoproteins by recruiting cargos into COPII vesicles to facilitate their secretion. Acts as a cargo receptor for lipoproteins bearing both APOB and APOA1, thereby regulating lipoprotein delivery and the maintenance of lipid homeostasis. Synergizes with the GTPase SAR1B to mediate transport of circulating lipoproteins. Promotes the secretion of PCSK9. Also mediates the efficient secretion of erythropoietin (EPO). May also play a role in the maintenance of the architecture of the endoplasmic reticulum-Golgi intermediate compartment and of the Golgi. In Homo sapiens (Human), this protein is Surfeit locus protein 4.